Reading from the N-terminus, the 525-residue chain is MDPFLLSIILCSWIFVVVSWKKLNCMRRRLPPGPPRWPIFGNLLQLSPLPHKDFARFCTKYGPLVYLRLGTIDAITTDDPEVIREILIRQDEVFASRPRTLAAVHLAYGCGDVALAPLGPNWKRMRRVCMEHLLTTKRLESFAAHRALEAEHLCQFVWAKAQSGKPVNLREVLGAFSMNNVTRMLLGKQYFGLQSAGPGEAMEFMHITHELFWLLGLIYLGDYLPAWRWLDPYGCEKKMREVEKKVDDFHQKIIDEHRKAREAKKSASLDDDNKEDMDFVDVLLSLPGENGKEHMDDVEIKALMQDMIAAATDTSSVTNEWVMAEVIKNPRVLRKIQEELDGVVGRGRMVAESDLGQLTYLRCVVRESFRMHPAGPFLIPHESLKPTTIMGYDIPARTRIFINTHALGRNTRIWDDVDAFRPERHLPASADGGRVEISHLPDFKILPFSAGKRKCPGAPLGVILVLMALARLFHCFDWSPPDGLRPDDIDTQEVYGMTMPKAKPLVAVATPRLPPQMYGRHGKQV.

Residues 3–23 traverse the membrane as a helical segment; sequence PFLLSIILCSWIFVVVSWKKL. Cys455 is a heme binding site.

This sequence belongs to the cytochrome P450 family. Heme is required as a cofactor.

Its subcellular location is the membrane. It catalyses the reaction dodecanoate + reduced [NADPH--hemoprotein reductase] + O2 = 7-hydroxydodecanoate + oxidized [NADPH--hemoprotein reductase] + H2O + H(+). Involved in pollen exine and anther epicuticular layer development. Catalyzes the in-chain hydroxylation of lauric acid (C12:0) preferentially on position 7, generating 7-hydroxylated lauric acid. Does not possess activity with other fatty acids (C14:0, C16:0, C16:1, and C18:0). Participates in a conserved pathway of in-chain hydroxylation of lauric acid required for anther cuticle and pollen exine formation. Directly regulated by TDR, a known regulator of tapetum programmed cell death (PCD) and pollen exine formation. The polypeptide is Cytochrome P450 703A2 (Oryza sativa subsp. japonica (Rice)).